A 109-amino-acid chain; its full sequence is Tektin-3 (109 aa).

This sequence belongs to the tektin family. In terms of assembly, microtubule inner protein component of sperm flagellar doublet microtubules. Interacts with TEKT1, TEKT2, TEKT4 and TEKT5. Interacts with CCDC38. N- and O-glycosylated. In terms of processing, may be proteolytically processed during the epididymal transit of spermatozoa. Post-translationally, ubiquitinated, leading to its degradation. Deubiquitinated by USP16, promoting its stability.

Its subcellular location is the cytoplasm. The protein resides in the cytoskeleton. The protein localises to the cilium axoneme. It is found in the flagellum axoneme. It localises to the cytoplasmic vesicle. Its subcellular location is the secretory vesicle. The protein resides in the acrosome outer membrane. In terms of biological role, microtubule inner protein (MIP) part of the dynein-decorated doublet microtubules (DMTs) in cilia and flagellar axoneme. Forms filamentous polymers in the walls of ciliary and flagellar microtubules. Required for normal sperm mobility. The chain is Tektin-3 from Mesocricetus auratus (Golden hamster).